The primary structure comprises 396 residues: Acetylornithine aminotransferase 2 (396 aa).

Residues 102–103 (GA) and Phe-134 each bind pyridoxal 5'-phosphate. Residue Arg-137 participates in N(2)-acetyl-L-ornithine binding. Pyridoxal 5'-phosphate is bound at residue 219-222 (DEVQ). Position 248 is an N6-(pyridoxal phosphate)lysine (Lys-248). Thr-276 contacts pyridoxal 5'-phosphate.

It belongs to the class-III pyridoxal-phosphate-dependent aminotransferase family. ArgD subfamily. In terms of assembly, homodimer. The cofactor is pyridoxal 5'-phosphate.

The protein resides in the cytoplasm. The enzyme catalyses N(2)-acetyl-L-ornithine + 2-oxoglutarate = N-acetyl-L-glutamate 5-semialdehyde + L-glutamate. The protein operates within amino-acid biosynthesis; L-arginine biosynthesis; N(2)-acetyl-L-ornithine from L-glutamate: step 4/4. The polypeptide is Acetylornithine aminotransferase 2 (Bordetella parapertussis (strain 12822 / ATCC BAA-587 / NCTC 13253)).